A 444-amino-acid polypeptide reads, in one-letter code: ATP-dependent protease ATPase subunit HslU (444 aa).

ATP-binding positions include Ile20 and 62-67 (GVGKTE). Residues 130–158 (EDRILDALVPPPRGASGEPERGEDNSARQ) are disordered. The ATP site is built by Asp257, Glu322, and Arg394.

The protein belongs to the ClpX chaperone family. HslU subfamily. A double ring-shaped homohexamer of HslV is capped on each side by a ring-shaped HslU homohexamer. The assembly of the HslU/HslV complex is dependent on binding of ATP.

Its subcellular location is the cytoplasm. Functionally, ATPase subunit of a proteasome-like degradation complex; this subunit has chaperone activity. The binding of ATP and its subsequent hydrolysis by HslU are essential for unfolding of protein substrates subsequently hydrolyzed by HslV. HslU recognizes the N-terminal part of its protein substrates and unfolds these before they are guided to HslV for hydrolysis. The sequence is that of ATP-dependent protease ATPase subunit HslU from Bordetella parapertussis (strain 12822 / ATCC BAA-587 / NCTC 13253).